Reading from the N-terminus, the 30-residue chain is Varv peptide H (30 aa).

The cyclopeptide (Gly-Asn) cross-link spans 1 to 30; the sequence is GLPVCGETCFGGTCNTPGCSCETWPVCSRN. 3 cysteine pairs are disulfide-bonded: cysteine 5/cysteine 19, cysteine 9/cysteine 21, and cysteine 14/cysteine 27.

Post-translationally, this is a cyclic peptide.

Its function is as follows. Probably participates in a plant defense mechanism. This Viola arvensis (European field pansy) protein is Varv peptide H.